The following is a 979-amino-acid chain: Protein argonaute PNH1 (979 aa).

The interval 1–95 (MLEVLDMAPP…GGRAGAGPGP (95 aa)) is disordered. Residues 54 to 67 (AETAAATAAVAPPE) are compositionally biased toward low complexity. The span at 77–86 (GRRRGGRGRG) shows a compositional bias: basic residues. Residues 333–446 (PVIEFVAQIL…LPMEACKIVE (114 aa)) enclose the PAZ domain. The Piwi domain maps to 620–941 (LLLAILPDNN…AAFRARFYME (322 aa)).

This sequence belongs to the argonaute family. Ago subfamily.

Its subcellular location is the cytoplasm. Functionally, probably involved in the RNA silencing pathway. May bind to short RNAs such as microRNAs (miRNAs) or short interfering RNAs (siRNAs), and represses the translation of mRNAs which are complementary to them. Plays a role in the maintenance of the indeterminate state of the stem cells in the shoot apical meristem (SAM). Regulates leaf formation through vascular development and may be involved in determining the central domain of the leaf founder region. This is Protein argonaute PNH1 (PHN1) from Oryza sativa subsp. japonica (Rice).